We begin with the raw amino-acid sequence, 394 residues long: Ketoisovalerate oxidoreductase subunit VorA (394 aa).

As to quaternary structure, heterotetramer of one alpha, one beta, one delta and one gamma chain.

It carries out the reaction 3-methyl-2-oxobutanoate + 2 oxidized [2Fe-2S]-[ferredoxin] + CoA = 2-methylpropanoyl-CoA + 2 reduced [2Fe-2S]-[ferredoxin] + CO2 + H(+). This is Ketoisovalerate oxidoreductase subunit VorA (vorA) from Pyrococcus furiosus (strain ATCC 43587 / DSM 3638 / JCM 8422 / Vc1).